We begin with the raw amino-acid sequence, 201 residues long: FMN-dependent NADH:quinone oxidoreductase (201 aa).

Residues 92–95 (MWNL) and 136–139 (STGG) each bind FMN.

It belongs to the azoreductase type 1 family. Homodimer. FMN is required as a cofactor.

The catalysed reaction is 2 a quinone + NADH + H(+) = 2 a 1,4-benzosemiquinone + NAD(+). It catalyses the reaction N,N-dimethyl-1,4-phenylenediamine + anthranilate + 2 NAD(+) = 2-(4-dimethylaminophenyl)diazenylbenzoate + 2 NADH + 2 H(+). Its function is as follows. Quinone reductase that provides resistance to thiol-specific stress caused by electrophilic quinones. In terms of biological role, also exhibits azoreductase activity. Catalyzes the reductive cleavage of the azo bond in aromatic azo compounds to the corresponding amines. This Coprothermobacter proteolyticus (strain ATCC 35245 / DSM 5265 / OCM 4 / BT) protein is FMN-dependent NADH:quinone oxidoreductase.